A 155-amino-acid chain; its full sequence is Regulatory protein RecX (155 aa).

Belongs to the RecX family.

The protein localises to the cytoplasm. Its function is as follows. Modulates RecA activity. This chain is Regulatory protein RecX, found in Pseudomonas fluorescens (strain SBW25).